The chain runs to 88 residues: Large ribosomal subunit protein eL31 (88 aa).

Belongs to the eukaryotic ribosomal protein eL31 family.

This Sulfurisphaera tokodaii (strain DSM 16993 / JCM 10545 / NBRC 100140 / 7) (Sulfolobus tokodaii) protein is Large ribosomal subunit protein eL31 (rpl31e).